The sequence spans 264 residues: Type III pantothenate kinase (264 aa).

6-13 serves as a coordination point for ATP; the sequence is DVGNTNIK. 108–111 lines the substrate pocket; it reads GSDR. The active-site Proton acceptor is the Asp110. An ATP-binding site is contributed by Thr134.

This sequence belongs to the type III pantothenate kinase family. In terms of assembly, homodimer. The cofactor is NH4(+). Requires K(+) as cofactor.

It localises to the cytoplasm. It carries out the reaction (R)-pantothenate + ATP = (R)-4'-phosphopantothenate + ADP + H(+). The protein operates within cofactor biosynthesis; coenzyme A biosynthesis; CoA from (R)-pantothenate: step 1/5. Catalyzes the phosphorylation of pantothenate (Pan), the first step in CoA biosynthesis. This is Type III pantothenate kinase from Ehrlichia canis (strain Jake).